The following is a 278-amino-acid chain: Probable aquaporin PIP2-8 (278 aa).

An N-acetylmethionine modification is found at Met-1. Topologically, residues 1–36 (MSKEVSEEGRHGKDYVDPPPAPLLDMAELKLWSFYR) are cytoplasmic. Lys-3 carries the N6,N6-dimethyllysine modification. Residues 37-57 (AIIAEFIATLLFLYVTVATVI) traverse the membrane as a helical segment. The Extracellular portion of the chain corresponds to 58–74 (GHKNQTGPCGGVGLLGI). The chain crosses the membrane as a helical span at residues 75–95 (AWAFGGMIFVLVYCTAGISGG). The Cytoplasmic segment spans residues 96 to 116 (HINPAVTFGLFLARKVSLPRA). The short motif at 98–100 (NPA) is the NPA 1 element. The helical transmembrane segment at 117 to 137 (VAYMVAQCLGAICGVGLVKAF) threads the bilayer. At 138 to 158 (MMTPYKRLGGGANTVADGYST) the chain is on the extracellular side. Residues 159 to 179 (GTALGAEIIGTFVLVYTVFSA) form a helical membrane-spanning segment. At 180 to 192 (TDPKRSARDSHVP) the chain is on the cytoplasmic side. Residues 193 to 213 (VLAPLPIGFAVFMVHLATIPI) form a helical membrane-spanning segment. Residues 214 to 240 (TGTGINPARSFGAAVIYNNEKAWDDHW) lie on the Extracellular side of the membrane. Residues 219–221 (NPA) carry the NPA 2 motif. The helical transmembrane segment at 241–261 (IFWVGPFVGALAAAAYHQYIL) threads the bilayer. Topologically, residues 262-278 (RAAAIKALASFRSNPTN) are cytoplasmic. Phosphoserine is present on residues Ser-271 and Ser-274.

It belongs to the MIP/aquaporin (TC 1.A.8) family. PIP (TC 1.A.8.11) subfamily. In terms of tissue distribution, expressed in roots and floral buds.

It localises to the cell membrane. Functionally, aquaporins facilitate the transport of water and small neutral solutes across cell membranes. The chain is Probable aquaporin PIP2-8 (PIP2-8) from Arabidopsis thaliana (Mouse-ear cress).